The chain runs to 1032 residues: Integrin alpha-4 (1032 aa).

The first 33 residues, 1–33 (MAWEARREPGPRRAAVRETVMLLLCLGVPTGRP), serve as a signal peptide directing secretion. FG-GAP repeat units follow at residues 35 to 100 (NVDT…PGQT), 110 to 177 (NGEP…TELS), 185 to 237 (QDYV…KYKA), 238 to 291 (FLDK…EKEL), 292 to 351 (NILH…GAVM), 355 to 412 (ETNL…GISS), and 416 to 478 (QRIE…HPES). The Extracellular portion of the chain corresponds to 35–977 (NVDTESALLY…HHQRPKRYFT (943 aa)). Asparagine 79 carries N-linked (GlcNAc...) asparagine glycosylation. Cysteines 91 and 101 form a disulfide. Asparagine 138 is a glycosylation site (N-linked (GlcNAc...) asparagine). 2 disulfides stabilise this stretch: cysteine 144-cysteine 165 and cysteine 183-cysteine 198. A glycan (N-linked (GlcNAc...) asparagine) is linked at asparagine 229. The Ca(2+) site is built by aspartate 314, asparagine 316, aspartate 318, aspartate 322, aspartate 377, aspartate 379, aspartate 381, aspartate 385, aspartate 439, aspartate 441, asparagine 443, tyrosine 445, and aspartate 447. The N-linked (GlcNAc...) asparagine glycan is linked to asparagine 480. Intrachain disulfides connect cysteine 486-cysteine 495 and cysteine 501-cysteine 557. 2 N-linked (GlcNAc...) asparagine glycosylation sites follow: asparagine 518 and asparagine 538. An SG1 motif is present at residues 606–616 (KKEKDIMKKTI). Cysteine 622 and cysteine 627 are joined by a disulfide. 3 N-linked (GlcNAc...) asparagine glycosylation sites follow: asparagine 626, asparagine 645, and asparagine 660. A disulfide bond links cysteine 698 and cysteine 711. N-linked (GlcNAc...) asparagine glycans are attached at residues asparagine 806 and asparagine 821. 2 cysteine pairs are disulfide-bonded: cysteine 852–cysteine 890 and cysteine 897–cysteine 902. A helical transmembrane segment spans residues 978 to 1001 (IVIISSSLLLGLIVLLLISYVMWK). Residues 1002-1032 (AGFFKRQYKSILQEENRRDSWSYINSKSNDD) are Cytoplasmic-facing. A GFFKR motif motif is present at residues 1003–1007 (GFFKR). Phosphoserine is present on serine 1021.

This sequence belongs to the integrin alpha chain family. In terms of assembly, heterodimer of an alpha and a beta subunit. The alpha subunit can sometimes be cleaved into two non-covalently associated fragments. Alpha-4 associates with either beta-1 or beta-7. Alpha-4 interacts with PXN, LPXN, and TGFB1I1/HIC5. Interacts with CSPG4 through CSPG4 chondroitin sulfate glycosaminoglycan. Interacts with JAML; integrin alpha-4/beta-1 may regulate leukocyte to endothelial cells adhesion by controlling JAML homodimerization. ITGA4:ITGB1 is found in a ternary complex with CX3CR1 and CX3CL1. Interacts with MDK. ITGA4:ITGB1 interacts with MDK; this interaction mediates MDK-induced osteoblast cells migration through PXN phosphorylation. Integrin ITGA4:ITGB1 interacts with SVEP1 (via Sushi domain 21); thereby inhibits Ca(2+) intracellular signaling and as a result represses vasocontraction. ITGA4:ITGB1 interacts with SELP. ITGA4:ITGB1 interacts with BCAM. Phosphorylation on Ser-1027 inhibits PXN binding. Expressed in vascular smooth muscle cells (at protein level).

It is found in the membrane. Integrins alpha-4/beta-1 (VLA-4) and alpha-4/beta-7 are receptors for fibronectin. They recognize one or more domains within the alternatively spliced CS-1 and CS-5 regions of fibronectin. They are also receptors for VCAM1. Integrin alpha-4/beta-1 recognizes the sequence Q-I-D-S in VCAM1. Integrin alpha-4/beta-7 is also a receptor for MADCAM1. It recognizes the sequence L-D-T in MADCAM1. On activated endothelial cells integrin VLA-4 triggers homotypic aggregation for most VLA-4-positive leukocyte cell lines. It may also participate in cytolytic T-cell interactions with target cells. ITGA4:ITGB1 binds to fractalkine (CX3CL1) and may act as its coreceptor in CX3CR1-dependent fractalkine signaling. ITGA4:ITGB1 binds to PLA2G2A via a site (site 2) which is distinct from the classical ligand-binding site (site 1) and this induces integrin conformational changes and enhanced ligand binding to site 1. Integrin ITGA4:ITGB1 represses PRKCA-mediated L-type voltage-gated channel Ca(2+) influx and ROCK-mediated calcium sensitivity in vascular smooth muscle cells via its interaction with SVEP1, thereby inhibiting vasocontraction. The chain is Integrin alpha-4 (ITGA4) from Homo sapiens (Human).